The chain runs to 114 residues: Histone H2B (114 aa).

The segment at 1–22 (MAKTPSKKAAKAPKKAGSKRNK) is disordered. K3 carries the N6-acetyllysine modification. K110 participates in a covalent cross-link: Glycyl lysine isopeptide (Lys-Gly) (interchain with G-Cter in ubiquitin).

It belongs to the histone H2B family. As to quaternary structure, the nucleosome is a histone octamer containing two molecules each of H2A, H2B, H3 and H4 assembled in one H3-H4 heterotetramer and two H2A-H2B heterodimers. The octamer wraps approximately 147 bp of DNA. Post-translationally, monoubiquitination of Lys-110 gives a specific tag for epigenetic transcriptional activation and is also prerequisite for histone H3 'Lys-4' and 'Lys-79' methylation.

It localises to the nucleus. The protein localises to the chromosome. In terms of biological role, core component of nucleosome. Nucleosomes wrap and compact DNA into chromatin, limiting DNA accessibility to the cellular machineries which require DNA as a template. Histones thereby play a central role in transcription regulation, DNA repair, DNA replication and chromosomal stability. DNA accessibility is regulated via a complex set of post-translational modifications of histones, also called histone code, and nucleosome remodeling. The protein is Histone H2B of Olisthodiscus luteus (Marine phytoflagellate).